Consider the following 116-residue polypeptide: ATP-dependent Clp protease adapter protein ClpS (116 aa).

Residues 1–11 are compositionally biased toward polar residues; sequence MRRFNTIMQGK. Positions 1 to 23 are disordered; the sequence is MRRFNTIMQGKTNGGNGPESGTV.

This sequence belongs to the ClpS family. In terms of assembly, binds to the N-terminal domain of the chaperone ClpA.

Involved in the modulation of the specificity of the ClpAP-mediated ATP-dependent protein degradation. The protein is ATP-dependent Clp protease adapter protein ClpS of Brucella melitensis biotype 2 (strain ATCC 23457).